We begin with the raw amino-acid sequence, 184 residues long: Dirigent protein 14 (184 aa).

A signal peptide spans 1 to 20; that stretch reads MANQIYLFSLICLSVLLCQS. A disulfide bond links cysteine 36 and cysteine 182. N-linked (GlcNAc...) asparagine glycans are attached at residues asparagine 55 and asparagine 119.

The protein belongs to the plant dirigent protein family. Homodimer.

The protein resides in the secreted. It localises to the extracellular space. It is found in the apoplast. In terms of biological role, dirigent proteins impart stereoselectivity on the phenoxy radical-coupling reaction, yielding optically active lignans from two molecules of coniferyl alcohol in the biosynthesis of lignans, flavonolignans, and alkaloids and thus plays a central role in plant secondary metabolism. The sequence is that of Dirigent protein 14 (DIR14) from Arabidopsis thaliana (Mouse-ear cress).